A 241-amino-acid polypeptide reads, in one-letter code: Zinc finger CCHC domain-containing protein 24 (241 aa).

Residues serine 65 and serine 93 each carry the phosphoserine modification. The CCHC-type zinc finger occupies 132–149 (YLCHLCFNKGHYIKDCPQ).

The polypeptide is Zinc finger CCHC domain-containing protein 24 (ZCCHC24) (Homo sapiens (Human)).